A 338-amino-acid polypeptide reads, in one-letter code: tRNA-specific 2-thiouridylase MnmA (338 aa).

ATP contacts are provided by residues 6–13 (AMSGGVDS) and Met-32. Residue Cys-92 is the Nucleophile of the active site. A disulfide bridge connects residues Cys-92 and Cys-186. An ATP-binding site is contributed by Gly-116. An interaction with tRNA region spans residues 134-136 (KDQ). Cys-186 functions as the Cysteine persulfide intermediate in the catalytic mechanism. Residues 288 to 289 (RY) are interaction with tRNA.

Belongs to the MnmA/TRMU family.

The protein localises to the cytoplasm. The enzyme catalyses S-sulfanyl-L-cysteinyl-[protein] + uridine(34) in tRNA + AH2 + ATP = 2-thiouridine(34) in tRNA + L-cysteinyl-[protein] + A + AMP + diphosphate + H(+). Functionally, catalyzes the 2-thiolation of uridine at the wobble position (U34) of tRNA, leading to the formation of s(2)U34. The sequence is that of tRNA-specific 2-thiouridylase MnmA from Campylobacter jejuni subsp. jejuni serotype O:2 (strain ATCC 700819 / NCTC 11168).